We begin with the raw amino-acid sequence, 241 residues long: Glucosamine-6-phosphate deaminase (241 aa).

Asp-67 (proton acceptor; for enolization step) is an active-site residue. Residue Asn-136 is the For ring-opening step of the active site. His-138 (proton acceptor; for ring-opening step) is an active-site residue. The active-site For ring-opening step is the Glu-143.

The protein belongs to the glucosamine/galactosamine-6-phosphate isomerase family. NagB subfamily.

The enzyme catalyses alpha-D-glucosamine 6-phosphate + H2O = beta-D-fructose 6-phosphate + NH4(+). The protein operates within amino-sugar metabolism; N-acetylneuraminate degradation; D-fructose 6-phosphate from N-acetylneuraminate: step 5/5. Its function is as follows. Catalyzes the reversible isomerization-deamination of glucosamine 6-phosphate (GlcN6P) to form fructose 6-phosphate (Fru6P) and ammonium ion. This is Glucosamine-6-phosphate deaminase from Alkaliphilus oremlandii (strain OhILAs) (Clostridium oremlandii (strain OhILAs)).